A 146-amino-acid polypeptide reads, in one-letter code: Ninjurin-1 (146 aa).

Positions 1–33 (MASEAMELNGGVNRRDDPGARPQQGRMSRNTPL) are disordered. Residues 1-75 (MASEAMELNG…ELGPSFSFYI (75 aa)) lie on the Extracellular side of the membrane. Residues 37-66 (HYANKKSAAESMLDIALLMANASQLKTVLE) form a required to induce plasma membrane rupture region. A helix alpha1 region spans residues 41–52 (KKSAAESMLDIA). Residues 55 to 71 (MANASQLKTVLELGPSF) are helix alpha2. A glycan (N-linked (GlcNAc...) asparagine) is linked at asparagine 57. The helical transmembrane segment at 76–100 (PLITLISISLTLQIIVGILLIFIVK) threads the bilayer. Residues 101–110 (WNLNDSSKHY) lie on the Cytoplasmic side of the membrane. A helical transmembrane segment spans residues 111–135 (ILNLLENIVTALVFIVVVVNVFITA). Over 136-146 (FGVQRPDDKTS) the chain is Extracellular.

It belongs to the ninjurin family. In terms of assembly, homooligomer; in response to death stimuli, homooligomerizes into long, highly branched filaments and large, ring-shaped structures in the membrane. Homodimer; in absence of death stimuli, forms an inactive homodimer. Homooligomer; in response to death stimuli, homooligomerizes into long, highly branched filaments and large, ring-shaped structures in the membrane.

The protein resides in the cell membrane. Its subcellular location is the synaptic cell membrane. Its activity is regulated as follows. In normal conditions, NINJ1 is inactivated. In response to death stimuli, homooligomerizes and disrupts membrane integrity by introducing the hydrophilic faces of alpha1 and alpha2 helices into the hydrophobic membrane. Homooligomerization and ability to mediate plasma membrane rupture is inhibited by glycine; it is unclear whether glycine directly or indirectly inhibits homooligomerization. With respect to regulation, in response to death stimuli, homooligomerizes and disrupts membrane integrity by introducing the hydrophilic faces of alpha1 and alpha2 helices into the hydrophobic membrane. Homooligomerization and ability to mediate plasma membrane rupture is inhibited by glycine; it is unclear whether glycine directly or indirectly inhibits homooligomerization. In normal conditions, NINJ1 is autoinhibited via formation of a homodimer: in the inactive homodimer, the alpha1 and alpha2 helices (residues 41-71) form a single transmembrane region without a kink, in which hydrophilic faces of alpha1 and alpha2 helices are sequestered. Effector of various programmed cell death, such as pyroptosis and necroptosis, which mediates plasma membrane rupture (cytolysis). Oligomerizes in response to death stimuli and forms ring-like structures on the plasma membrane: acts by cutting and shedding membrane disks, like a cookie cutter, leading to membrane damage and loss that cannot be repaired by the cell. Plasma membrane rupture leads to release intracellular molecules named damage-associated molecular patterns (DAMPs) that propagate the inflammatory response. Mechanistically, mediates plasma membrane rupture by introducing hydrophilic faces of 2 alpha helices into the hydrophobic membrane. Induces plasma membrane rupture downstream of Gasdermin (GSDMA, GSDMB, GSDMC, GSDMD, or GSDME) or MLKL during pyroptosis or necroptosis, respectively. Also acts as an effector of PANoptosis and ferroptosis. Induces plasma membrane rupture in response to cell swelling caused by osmotic stress. Acts as a regulator of Toll-like receptor 4 (TLR4) signaling triggered by lipopolysaccharide (LPS) during systemic inflammation; directly binds LPS. Involved in leukocyte migration during inflammation by promoting transendothelial migration of macrophages via homotypic binding. Promotes the migration of monocytes across the brain endothelium to central nervous system inflammatory lesions. Also acts as a homophilic transmembrane adhesion molecule involved in various processes such as axonal growth, cell chemotaxis and angiogenesis. Promotes cell adhesion by mediating homophilic interactions via its extracellular N-terminal adhesion motif (N-NAM). Also involved in striated muscle growth and differentiation. The sequence is that of Ninjurin-1 from Danio rerio (Zebrafish).